Consider the following 368-residue polypeptide: Cytochrome-c peroxidase IdrP2 (368 aa).

The first 27 residues, 1–27 (MKWHRGRLTQTLGAMGLTATLTVAAQA), serve as a signal peptide directing secretion. 2 consecutive Cytochrome c domains span residues 48 to 158 (AMIE…ALWQ) and 201 to 346 (KEAQ…LTLS). Cys70, Cys73, His74, Cys216, Cys219, and His220 together coordinate heme c.

The iodate reductase (Idr) complex is composed of a molybdopterin-dependent iodate reductase (IdrA and IdrB subunits) and two associated peroxidases (IdrP1 and IdrP2). The cofactor is heme c.

The protein localises to the periplasm. The catalysed reaction is 2 Fe(II)-[cytochrome c] + H2O2 + 2 H(+) = 2 Fe(III)-[cytochrome c] + 2 H2O. In terms of biological role, involved in iodate respiration. Probably reduces the H(2)O(2) produced by IdrA/IdrB to H(2)O, using a reduced cytochrome c as the electron donor. The protein is Cytochrome-c peroxidase IdrP2 of Pseudomonas sp. (strain SCT).